The chain runs to 686 residues: Cyclic nucleotide-gated channel alpha-1 (686 aa).

Over 1-165 (MKNNIINTQQ…PSGNTYYNWL (165 aa)) the chain is Cytoplasmic. Disordered stretches follow at residues 31–75 (ENGA…PSQR) and 87–149 (NVNN…EEKK). The segment covering 39-53 (SEDDDSASTSEESEN) has biased composition (acidic residues). A compositionally biased stretch (basic and acidic residues) spans 110-124 (SKSDDKNENKNDPEK). A compositionally biased stretch (basic residues) spans 125–134 (KKKKKDKEKK). Residues 135 to 149 (KKEEKSKDKKEEEKK) are compositionally biased toward basic and acidic residues. The helical transmembrane segment at 166–187 (FCITLPVMYNWTMVIARACFDE) threads the bilayer. At 188 to 197 (LQSDYLEYWL) the chain is on the extracellular side. A helical membrane pass occupies residues 198 to 218 (ILDYVSDIVYLIDMFVRTRTG). Topologically, residues 219–243 (YLEQGLLVKEELKLINKYKSNLQFK) are cytoplasmic. Residues 244–262 (LDVLSLIPTDLLYFKLGWN) traverse the membrane as a helical segment. Residues 263–267 (YPEIR) lie on the Extracellular side of the membrane. The helical transmembrane segment at 268–286 (LNRLLRFSRMFEFFQRTET) threads the bilayer. Over 287–293 (RTNYPNI) the chain is Cytoplasmic. An ion conduction pathway region spans residues 291–399 (PNIFRISNLV…GNIGSMISNM (109 aa)). The chain crosses the membrane as a helical span at residues 294 to 317 (FRISNLVMYIVIIIHWNACVFYSI). The Extracellular segment spans residues 318 to 340 (SKAIGFGNDTWVYPDINDPEFGR). Asn-325 is a glycosylation site (N-linked (GlcNAc...) asparagine). 2 consecutive transmembrane segments (helical) span residues 341–375 (LARKYVYSLYWSTLTLTTIGETPPPVRDSEYVFVV) and 376–400 (VDFLIGVLIFATIVGNIGSMISNMN). The selectivity filter stretch occupies residues 358–361 (TIGE). Residues 401 to 477 (AARAEFQARI…DTLKKVRIFA (77 aa)) form a C-linker region. Residues 401–686 (AARAEFQARI…GAESGPIDST (286 aa)) are Cytoplasmic-facing. The cyclic nucleotide-binding domain stretch occupies residues 481–601 (AGLLVELVLK…EEKGKQILMK (121 aa)). Positions 541, 544, 557, and 558 each coordinate 3',5'-cyclic GMP. 2 residues coordinate 3',5'-cyclic AMP: Arg-557 and Thr-558. Residues 619–673 (LEEKVTRMEGSVDLLQTRFARILAEYESMQQKLKQRLTKVEKFLKPLIDTEFSSI) adopt a coiled-coil conformation.

The protein belongs to the cyclic nucleotide-gated cation channel (TC 1.A.1.5) family. CNGA1 subfamily. As to quaternary structure, forms heterotetrameric channels composed of CNGA1 and CNGB1 subunits with 3:1 stoichiometry. May also form cyclic nucleotide-activated homotetrameric channels, that are efficiently activated by saturating cGMP, but poorly activated by saturating cAMP compared to the heterotetramer with CNGB1. The channel binds Ca(2+)-bound CALM1 via CaM1 and CaM2 regions of the CNGB1 subunit; this interaction modulates the affinity of the channel for cNMPs in response to intracellular Ca(2+) levels. As to expression, rod cells in the retina.

The protein localises to the cell membrane. It carries out the reaction Ca(2+)(in) = Ca(2+)(out). The catalysed reaction is Na(+)(in) = Na(+)(out). The enzyme catalyses K(+)(in) = K(+)(out). It catalyses the reaction NH4(+)(in) = NH4(+)(out). It carries out the reaction Rb(+)(in) = Rb(+)(out). The catalysed reaction is Li(+)(in) = Li(+)(out). The enzyme catalyses Cs(+)(in) = Cs(+)(out). Its activity is regulated as follows. Channel opening is activated by cGMP and at a much lesser extent by cAMP. Ca(2+) binding concominantly blocks monovalent cation currents. Inhibited by L-cis-diltiazem. Pore-forming subunit of the rod cyclic nucleotide-gated channel. Mediates rod photoresponses at dim light converting transient changes in intracellular cGMP levels into electrical signals. In the dark, cGMP levels are high and keep the channel open enabling a steady inward current carried by Na(+) and Ca(2+) ions that leads to membrane depolarization and neurotransmitter release from synaptic terminals. Upon photon absorption cGMP levels decline leading to channel closure and membrane hyperpolarization that ultimately slows neurotransmitter release and signals the presence of light, the end point of the phototransduction cascade. Conducts cGMP- and cAMP-gated ion currents, with permeability for monovalent and divalent cations. The selectivity for Ca(2+) over Na(+) increases with cGMP concentrations, whereas the selectivity among monovalent ions is independent of the cGMP levels. In Homo sapiens (Human), this protein is Cyclic nucleotide-gated channel alpha-1.